The sequence spans 270 residues: Bis(5'-nucleosyl)-tetraphosphatase, symmetrical (270 aa).

The protein belongs to the Ap4A hydrolase family.

The enzyme catalyses P(1),P(4)-bis(5'-adenosyl) tetraphosphate + H2O = 2 ADP + 2 H(+). Hydrolyzes diadenosine 5',5'''-P1,P4-tetraphosphate to yield ADP. This is Bis(5'-nucleosyl)-tetraphosphatase, symmetrical from Actinobacillus pleuropneumoniae serotype 3 (strain JL03).